A 315-amino-acid polypeptide reads, in one-letter code: Ribosomal protein L11 methyltransferase (315 aa).

S-adenosyl-L-methionine contacts are provided by Thr161, Gly182, Asp204, and Asn248.

The protein belongs to the methyltransferase superfamily. PrmA family.

It is found in the cytoplasm. The enzyme catalyses L-lysyl-[protein] + 3 S-adenosyl-L-methionine = N(6),N(6),N(6)-trimethyl-L-lysyl-[protein] + 3 S-adenosyl-L-homocysteine + 3 H(+). In terms of biological role, methylates ribosomal protein L11. The chain is Ribosomal protein L11 methyltransferase from Shouchella clausii (strain KSM-K16) (Alkalihalobacillus clausii).